Here is a 230-residue protein sequence, read N- to C-terminus: Chalcone--flavanone isomerase (230 aa).

Residues T52, N117, and S194 each coordinate substrate.

The protein belongs to the chalcone isomerase family.

It catalyses the reaction a chalcone = a flavanone.. It participates in secondary metabolite biosynthesis; flavonoid biosynthesis. Catalyzes the intramolecular cyclization of bicyclic chalcones into tricyclic (S)-flavanones. Responsible for the isomerization of 4,2',4',6'-tetrahydroxychalcone (also termed chalcone) into naringenin. The sequence is that of Chalcone--flavanone isomerase (CHI) from Camellia sinensis (Tea plant).